Reading from the N-terminus, the 45-residue chain is MYQCLRCGGIFNKRREVVEHLLVGHKHKDRLTLDFYYIYFRVRGQ.

The C2H2-type zinc-finger motif lies at 2-25 (YQCLRCGGIFNKRREVVEHLLVGH).

This is an uncharacterized protein from Sulfolobus spindle-shape virus 1 (SSV1).